Reading from the N-terminus, the 132-residue chain is Acetylcholinesterase (132 aa).

N-linked (GlcNAc...) asparagine glycosylation is present at Asn-37. The cysteines at positions 45 and 72 are disulfide-linked.

It belongs to the type-B carboxylesterase/lipase family.

It is found in the synapse. The protein localises to the secreted. The protein resides in the cell membrane. It carries out the reaction acetylcholine + H2O = choline + acetate + H(+). Functionally, rapidly hydrolyzes choline released into the synapse. This is Acetylcholinesterase (ACE-1) from Culex pipiens pipiens (Northern house mosquito).